A 60-amino-acid polypeptide reads, in one-letter code: Large ribosomal subunit protein bL32 (60 aa).

The interval 1–60 (MAVQQVKKSRSKRDMRRSHDSLTGPTLSTDKSTGELHLRHHVSPNGFYKGKKVVDTKSED) is disordered. Residues 7–16 (KKSRSKRDMR) show a composition bias toward basic residues.

Belongs to the bacterial ribosomal protein bL32 family.

The sequence is that of Large ribosomal subunit protein bL32 from Francisella philomiragia subsp. philomiragia (strain ATCC 25017 / CCUG 19701 / FSC 153 / O#319-036).